A 484-amino-acid polypeptide reads, in one-letter code: Probable receptor-like protein kinase At5g18500 (484 aa).

A helical transmembrane segment spans residues 21 to 41 (IIVIVLSAIFVVVLAISLWLT). Residues 72–135 (RVDEVSSSNG…SVSSANPLTA (64 aa)) form a disordered region. The span at 91–105 (KFGDKEPEKGIKAES) shows a compositional bias: basic and acidic residues. Polar residues predominate over residues 125 to 134 (SSVSSANPLT). T155 carries the post-translational modification Phosphothreonine. Residues 166-445 (FSRDNIIGDG…MLESEEYPIA (280 aa)) enclose the Protein kinase domain. Residues 172–180 (IGDGGYGVV) and K194 contribute to the ATP site. Phosphotyrosine is present on Y239. Catalysis depends on D292, which acts as the Proton acceptor. Residue S296 is modified to Phosphoserine. Residues T326 and T331 each carry the phosphothreonine modification. Y339 is subject to Phosphotyrosine. The disordered stretch occupies residues 425–484 (EKRPRMSQVARMLESEEYPIAREDRRRRRSQNGTTRDSDPPRNSTDTDKSEYHDLKPEGG). Positions 460-484 (RDSDPPRNSTDTDKSEYHDLKPEGG) are enriched in basic and acidic residues.

The protein belongs to the protein kinase superfamily. Ser/Thr protein kinase family.

It is found in the cell membrane. The enzyme catalyses L-seryl-[protein] + ATP = O-phospho-L-seryl-[protein] + ADP + H(+). The catalysed reaction is L-threonyl-[protein] + ATP = O-phospho-L-threonyl-[protein] + ADP + H(+). This chain is Probable receptor-like protein kinase At5g18500, found in Arabidopsis thaliana (Mouse-ear cress).